Consider the following 156-residue polypeptide: Small ribosomal subunit protein uS7 (156 aa).

Belongs to the universal ribosomal protein uS7 family. Part of the 30S ribosomal subunit. Contacts proteins S9 and S11.

Its function is as follows. One of the primary rRNA binding proteins, it binds directly to 16S rRNA where it nucleates assembly of the head domain of the 30S subunit. Is located at the subunit interface close to the decoding center, probably blocks exit of the E-site tRNA. This Sinorhizobium medicae (strain WSM419) (Ensifer medicae) protein is Small ribosomal subunit protein uS7.